Consider the following 671-residue polypeptide: Receptor-interacting serine/threonine-protein kinase 1 (671 aa).

Ser-6 is modified (phosphoserine; by IKKA and IKKB). Residues 17–289 (FLESAELDSG…GIEEKFRPFY (273 aa)) enclose the Protein kinase domain. Ser-20 carries the phosphoserine; by autocatalysis modification. Residues 23–31 (LDSGGFGKV) and Lys-45 each bind ATP. Residue Ser-25 is modified to Phosphoserine; by IKKA and IKKB. The active-site Proton acceptor is Asp-138. Phosphoserine; by RIPK3 and autocatalysis is present on Ser-161. Ser-166 carries the post-translational modification Phosphoserine; by autocatalysis. Residues 290–582 (LSQLEESVEE…QAIFDNTTSL (293 aa)) are interaction with SQSTM1. A Phosphoserine modification is found at Ser-303. Phosphoserine; by MAP3K7 is present on residues Ser-320, Ser-331, and Ser-333. Positions 331 to 348 (SRSNSATEQPGSLHSSQG) are enriched in polar residues. Residues 331–354 (SRSNSATEQPGSLHSSQGLGMGPV) are disordered. Residue Lys-377 forms a Glycyl lysine isopeptide (Lys-Gly) (interchain with G-Cter in ubiquitin) linkage. Residue Tyr-384 is modified to Phosphotyrosine. The segment at 389 to 455 (SRMDRQTKQQ…GNAVHQPSGL (67 aa)) is disordered. The segment covering 428–444 (NFQNTEGKGTAYSSAAS) has biased composition (polar residues). The RIP homotypic interaction motif (RHIM) signature appears at 531–547 (YTIYNSTGIQIGAYNYM). Positions 583-669 (TDKHLDPIRE…DLLSSLIYVS (87 aa)) constitute a Death domain. (Microbial infection) N-beta-linked (GlcNAc) arginine glycosylation occurs at Arg-603.

Belongs to the protein kinase superfamily. TKL Ser/Thr protein kinase family. In terms of assembly, homodimer. Interacts (via RIP homotypic interaction motif) with RIPK3 (via RIP homotypic interaction motif); this interaction induces RIPK1 phosphorylation and formation of a RIPK1-RIPK3 necroptosis-inducing complex. Upon TNF-induced necrosis, the RIPK1-RIPK3 dimer further interacts with PGAM5 and MLKL; the formation of this complex leads to PGAM5 phosphorylation and increase in PGAM5 phosphatase activity. Interacts (via the death domain) with TNFRSF6 (via the death domain) and TRADD (via the death domain). Is recruited by TRADD to TNFRSF1A in a TNF-dependent process. Binds RNF216, EGFR, IKBKG, TRAF1, TRAF2 and TRAF3. Interacts with BNLF1. Interacts with SQSTM1 upon TNF-alpha stimulation. May interact with MAVS/IPS1. Interacts with ZFAND5. Interacts with RBCK1. Interacts with ZBP1. Interacts with BIRC2/c-IAP1, BIRC3/c-IAP2 and XIAP/BIRC4. Interacts (via kinase domain) with DAB2IP (via Ras-GAP domain); the interaction occurs in a TNF-alpha-dependent manner. Interacts with ARHGEF2. Interacts (via protein kinase domain) with RFFL; involved in RIPK1 ubiquitination. Interacts with RNF34; involved in RIPK1 ubiquitination. Interacts with TICAM1 and this interaction is enhanced in the presence of WDFY1. Interacts with PELI1. Interacts (via death domain) with CRADD (via death domain); the interaction is direct. Component of complex IIa composed of at least RIPK1, FADD and CASP8. Component of the AIM2 PANoptosome complex, a multiprotein complex that drives inflammatory cell death (PANoptosis). Interacts with MAP3K7, CFLAR, CASP8, FADD and NEMO. Interacts with TAX1BP1; this interaction negatively regulates RIPK1 ubiquitination. Interacts with GRB2. Interacts with DDX24; this interaction disrupts RLR signaling activation of IFN-dependent transcription factor IRF7. (Microbial infection) Interacts with mumps virus protein SH; this interaction inhibits downstream NF-kappa-B pathway activation. As to quaternary structure, (Microbial infection) Interacts with Murid herpesvirus 1 protein RIR1. In terms of assembly, (Microbial infection) Interacts (via RIP homotypic interaction motif) with herpes simplex virus 1/HHV-1 protein RIR1/ICP6 (via RIP homotypic interaction motif); this interaction prevents necroptosis activation. (Microbial infection) Interacts (via RIP homotypic interaction motif) with herpes simplex virus 2/HHV-2 protein RIR1/ICP10 (via RIP homotypic interaction motif); this interaction prevents necroptosis activation. Post-translationally, (Microbial infection) Proteolytically cleaved by S.flexneri OspD3 within the RIP homotypic interaction motif (RHIM), leading to its degradation and inhibition of necroptosis. In terms of processing, proteolytically cleaved by CASP8 at Asp-324. Cleavage is crucial for limiting TNF-induced apoptosis, necroptosis and inflammatory response. Cleavage abolishes NF-kappa-B activation and enhances the interaction of TRADD with FADD. Proteolytically cleaved by CASP6 during intrinsic apoptosis. RIPK1 and RIPK3 undergo reciprocal auto- and trans-phosphorylation. Phosphorylation of Ser-161 by RIPK3 is necessary for the formation of the necroptosis-inducing complex. Phosphorylation at Ser-25 represses its kinase activity and consequently prevents TNF-mediated RIPK1-dependent cell death. Phosphorylated at Ser-320 by MAP3K7 which requires prior ubiquitination with 'Lys-63'-linked chains by BIRC2/c-IAP1 and BIRC3/c-IAP2. This phosphorylation positively regulates RIPK1 interaction with RIPK3 to promote necroptosis but negatively regulates RIPK1 kinase activity and its interaction with FADD to mediate apoptosis. Post-translationally, deubiquitinated by USP7; this modification is required for TNF-alpha-induced apoptosis. In terms of processing, ubiquitinated with 'Lys-11'-, 'Lys-48'-, 'Lys-63'- and linear-linked type ubiquitin. Polyubiquitination with 'Lys-63'-linked chains by TRAF2 induces association with the IKK complex. Deubiquitination of 'Lys-63'-linked chains and polyubiquitination with 'Lys-48'-linked chains by TNFAIP3 leads to RIPK1 proteasomal degradation and consequently down-regulates TNF-alpha-induced NF-kappa-B signaling. 'Lys-48'-linked polyubiquitination by RFFL or RNF34 also promotes proteasomal degradation and negatively regulates TNF-alpha-induced NF-kappa-B signaling. Linear polyubiquitinated; the head-to-tail linear polyubiquitination ('Met-1'-linked) is mediated by the LUBAC complex and decreases protein kinase activity. Deubiquitination of linear polyubiquitin by CYLD promotes the kinase activity. Polyubiquitinated with 'Lys-48' and 'Lys-63'-linked chains by BIRC2/c-IAP1 and BIRC3/c-IAP2, leading to activation of NF-kappa-B. Ubiquitinated with 'Lys-63'-linked chains by PELI1. Ubiquitination at Lys-377 with 'Lys-63'-linked chains by BIRC2/c-IAP1 and BIRC3/c-IAP2 is essential for its phosphorylation at Ser-320 mediated by MAP3K7. This ubiquitination is required for NF-kB activation, suppresses RIPK1 kinase activity and plays a critical role in preventing cell death during embryonic development. (Microbial infection) Glycosylated at Arg-603 by enteropathogenic E.coli protein NleB1: arginine GlcNAcylation prevents homotypic/heterotypic death domain interactions.

The protein resides in the cytoplasm. It is found in the cell membrane. The catalysed reaction is L-seryl-[protein] + ATP = O-phospho-L-seryl-[protein] + ADP + H(+). It catalyses the reaction L-threonyl-[protein] + ATP = O-phospho-L-threonyl-[protein] + ADP + H(+). Serine-threonine kinase activity is inhibited by linear polyubiquitination ('Met-1'-linked) by the LUBAC complex. Inhibited by necrostatins, including necrostatin-1, necrostatin-3 and necrostatin-4. Serine-threonine kinase which is a key regulator of TNF-mediated apoptosis, necroptosis and inflammatory pathways. Exhibits kinase activity-dependent functions that regulate cell death and kinase-independent scaffold functions regulating inflammatory signaling and cell survival. Has kinase-independent scaffold functions: upon binding of TNF to TNFR1, RIPK1 is recruited to the TNF-R1 signaling complex (TNF-RSC also known as complex I) where it acts as a scaffold protein promoting cell survival, in part, by activating the canonical NF-kappa-B pathway. Kinase activity is essential to regulate necroptosis and apoptosis, two parallel forms of cell death: upon activation of its protein kinase activity, regulates assembly of two death-inducing complexes, namely complex IIa (RIPK1-FADD-CASP8), which drives apoptosis, and the complex IIb (RIPK1-RIPK3-MLKL), which drives necroptosis. RIPK1 is required to limit CASP8-dependent TNFR1-induced apoptosis. In normal conditions, RIPK1 acts as an inhibitor of RIPK3-dependent necroptosis, a process mediated by RIPK3 component of complex IIb, which catalyzes phosphorylation of MLKL upon induction by ZBP1. Inhibits RIPK3-mediated necroptosis via FADD-mediated recruitment of CASP8, which cleaves RIPK1 and limits TNF-induced necroptosis. Required to inhibit apoptosis and necroptosis during embryonic development: acts by preventing the interaction of TRADD with FADD thereby limiting aberrant activation of CASP8. In addition to apoptosis and necroptosis, also involved in inflammatory response by promoting transcriptional production of pro-inflammatory cytokines, such as interleukin-6 (IL6). Phosphorylates RIPK3: RIPK1 and RIPK3 undergo reciprocal auto- and trans-phosphorylation. Phosphorylates DAB2IP at 'Ser-728' in a TNF-alpha-dependent manner, and thereby activates the MAP3K5-JNK apoptotic cascade. Required for ZBP1-induced NF-kappa-B activation in response to DNA damage. In Homo sapiens (Human), this protein is Receptor-interacting serine/threonine-protein kinase 1.